A 310-amino-acid polypeptide reads, in one-letter code: tRNA pseudouridine synthase B (310 aa).

Asp38 functions as the Nucleophile in the catalytic mechanism.

It belongs to the pseudouridine synthase TruB family. Type 1 subfamily.

The enzyme catalyses uridine(55) in tRNA = pseudouridine(55) in tRNA. Functionally, responsible for synthesis of pseudouridine from uracil-55 in the psi GC loop of transfer RNAs. The chain is tRNA pseudouridine synthase B from Geotalea uraniireducens (strain Rf4) (Geobacter uraniireducens).